Reading from the N-terminus, the 331-residue chain is Ribosomal RNA small subunit methyltransferase C (331 aa).

Belongs to the methyltransferase superfamily. RsmC family. In terms of assembly, monomer.

It localises to the cytoplasm. The catalysed reaction is guanosine(1207) in 16S rRNA + S-adenosyl-L-methionine = N(2)-methylguanosine(1207) in 16S rRNA + S-adenosyl-L-homocysteine + H(+). Its function is as follows. Specifically methylates the guanine in position 1207 of 16S rRNA in the 30S particle. The polypeptide is Ribosomal RNA small subunit methyltransferase C (Pseudomonas putida (strain W619)).